A 275-amino-acid polypeptide reads, in one-letter code: Lectin (275 aa).

The N-terminal stretch at 1–30 is a signal peptide; it reads MASLQTQMISFYLIFLSILLTTIFFFKVNS. Positions 111 and 129 each coordinate D-glucose. The Mn(2+) site is built by glutamate 149 and aspartate 151. Residues aspartate 151, phenylalanine 153, asparagine 155, and aspartate 159 each coordinate Ca(2+). Aspartate 159 and histidine 166 together coordinate Mn(2+). Residues 211 to 217 constitute a propeptide that is removed on maturation; that stretch reads NSLEEEN. Residues glycine 246 and alanine 247 each coordinate D-glucose. The propeptide occupies 270-275; sequence KQAADA.

This sequence belongs to the leguminous lectin family. In terms of assembly, heterotetramer of two alpha and two beta chains. In terms of processing, the mature form consists of two chains, alpha and beta, produced by cleavage of the immature protein. These remain cleaved, yet fold together to form one subunit.

Functionally, D-mannose specific lectin. The protein is Lectin of Lens culinaris subsp. tomentosus (Lentil).